The chain runs to 366 residues: Capsular polysaccharide phosphotransferase LcbA (366 aa).

The protein belongs to the stealth family.

This Neisseria meningitidis protein is Capsular polysaccharide phosphotransferase LcbA (lcbA).